A 435-amino-acid chain; its full sequence is Matrix extracellular phosphoglycoprotein (435 aa).

The first 16 residues, 1 to 16, serve as a signal peptide directing secretion; that stretch reads MQAVSVGLFLFSMTWA. Asn71 carries an N-linked (GlcNAc...) asparagine glycan. Disordered stretches follow at residues 124–145 and 166–435; these read LLQNSPGQSKHTPRARRSTHYL and LLVR…SSGD. The interval 164 to 186 is dentonin; sequence PDLLVRGDNDVPPFSGDGQHFMH. The Cell attachment site signature appears at 169 to 171; the sequence is RGD. The O-linked (Xyl...) (chondroitin sulfate) serine glycan is linked to Ser178. Basic and acidic residues-rich tracts occupy residues 267–278 and 300–313; these read KFRELPGKEGNR and SKEKVKGGSREHTG. Over residues 337-346 the composition is skewed to polar residues; that stretch reads GNQVTLTESQ. Composition is skewed to basic residues over residues 382 to 391 and 405 to 415; these read AHRRTSHPTR and RRPHPHRRVST. Residues 418-435 form an ASARM motif; interaction with PHEX region; sequence RDSSESSSSGSSSESSGD. A compositionally biased stretch (low complexity) spans 422–435; that stretch reads ESSSSGSSSESSGD.

The protein belongs to the PF07175/osteoregulin family. In terms of assembly, interacts (via ASARM motif) with PHEX; the interaction is zinc-dependent. Phosphorylated on serine residues in the ASARM motif; the phosphorylation is important for the inhibition of bone mineralization. Post-translationally, cleaved by CTSB/cathepsin B; the cleavage is blocked by metalloprotease PHEX. In terms of tissue distribution, expressed in osteoblasts and osteocytes.

It localises to the secreted. The protein localises to the extracellular space. The protein resides in the extracellular matrix. Regulates renal phosphate excretion. Regulates bone mineralization by osteoblasts and cartilage mineralization by chondrocytes. Regulates the mineralization of the extracellular matrix of the craniofacial complex, such as teeth, bone and cartilage. Increases dental pulp stem cell proliferation. The sequence is that of Matrix extracellular phosphoglycoprotein from Rattus norvegicus (Rat).